Consider the following 296-residue polypeptide: Aspartate carbamoyltransferase catalytic subunit (296 aa).

Carbamoyl phosphate is bound by residues Arg-50 and Thr-51. Lys-79 provides a ligand contact to L-aspartate. Residues Arg-100, His-128, and Gln-131 each coordinate carbamoyl phosphate. The L-aspartate site is built by Arg-161 and Arg-219. Residues Leu-258 and Pro-259 each coordinate carbamoyl phosphate.

Belongs to the aspartate/ornithine carbamoyltransferase superfamily. ATCase family. In terms of assembly, heterooligomer of catalytic and regulatory chains.

It carries out the reaction carbamoyl phosphate + L-aspartate = N-carbamoyl-L-aspartate + phosphate + H(+). It participates in pyrimidine metabolism; UMP biosynthesis via de novo pathway; (S)-dihydroorotate from bicarbonate: step 2/3. Functionally, catalyzes the condensation of carbamoyl phosphate and aspartate to form carbamoyl aspartate and inorganic phosphate, the committed step in the de novo pyrimidine nucleotide biosynthesis pathway. The sequence is that of Aspartate carbamoyltransferase catalytic subunit from Korarchaeum cryptofilum (strain OPF8).